The chain runs to 490 residues: Zinc finger protein STP4 (490 aa).

2 stretches are compositionally biased toward low complexity: residues 1-16 and 52-73; these read MLVS…SVMS and PSLP…STLN. Residues 1–85 are disordered; the sequence is MLVSSSFASS…PPPPLTTSYS (85 aa). Residues serine 153 and serine 155 each carry the phosphoserine modification. Residues 231–247 are compositionally biased toward low complexity; sequence QQQQQLNSSSSASALPS. Residues 231 to 273 are disordered; sequence QQQQQLNSSSSASALPSIHSPLTNEHTSRYSSSLKDSAKITKQ. Over residues 250–265 the composition is skewed to polar residues; that stretch reads SPLTNEHTSRYSSSLK. The C2H2-type zinc-finger motif lies at 304 to 326; sequence HKCPICQRGFARNNDLIRHKKRH. The interval 338–375 is disordered; that stretch reads ESDNNSGADDQDDTARTSANNDSDDSNDKLAASSSSEE.

The protein resides in the cytoplasm. The protein localises to the mitochondrion. Its subcellular location is the nucleus. This is Zinc finger protein STP4 (STP4) from Saccharomyces cerevisiae (strain ATCC 204508 / S288c) (Baker's yeast).